The primary structure comprises 151 residues: Cytochrome c-type biogenesis protein CcmE 2 (151 aa).

Topologically, residues 1–8 are cytoplasmic; that stretch reads MNPLRKKR. Residues 9-29 traverse the membrane as a helical; Signal-anchor for type II membrane protein segment; sequence LVIILAILVGVGAAVGLALSA. The Periplasmic segment spans residues 30–151; that stretch reads LQQNINLFYT…QSAPAPGKEG (122 aa). Heme-binding residues include His-124 and Tyr-128.

This sequence belongs to the CcmE/CycJ family.

Its subcellular location is the cell inner membrane. Heme chaperone required for the biogenesis of c-type cytochromes. Transiently binds heme delivered by CcmC and transfers the heme to apo-cytochromes in a process facilitated by CcmF and CcmH. This chain is Cytochrome c-type biogenesis protein CcmE 2, found in Pseudomonas fluorescens (strain Pf0-1).